The primary structure comprises 604 residues: uncharacterized protein (604 aa).

The segment at 239-259 (ELNSPQELNDPQELNNSQDLN) is disordered.

This is an uncharacterized protein from Escherichia coli (strain K12).